A 155-amino-acid chain; its full sequence is SsrA-binding protein (155 aa).

The protein belongs to the SmpB family.

It is found in the cytoplasm. In terms of biological role, required for rescue of stalled ribosomes mediated by trans-translation. Binds to transfer-messenger RNA (tmRNA), required for stable association of tmRNA with ribosomes. tmRNA and SmpB together mimic tRNA shape, replacing the anticodon stem-loop with SmpB. tmRNA is encoded by the ssrA gene; the 2 termini fold to resemble tRNA(Ala) and it encodes a 'tag peptide', a short internal open reading frame. During trans-translation Ala-aminoacylated tmRNA acts like a tRNA, entering the A-site of stalled ribosomes, displacing the stalled mRNA. The ribosome then switches to translate the ORF on the tmRNA; the nascent peptide is terminated with the 'tag peptide' encoded by the tmRNA and targeted for degradation. The ribosome is freed to recommence translation, which seems to be the essential function of trans-translation. This chain is SsrA-binding protein, found in Streptococcus equi subsp. equi (strain 4047).